Consider the following 310-residue polypeptide: tRNA-cytidine(32) 2-sulfurtransferase (310 aa).

A PP-loop motif motif is present at residues 47 to 52 (SGGKDS). Positions 122, 125, and 213 each coordinate [4Fe-4S] cluster.

Belongs to the TtcA family. As to quaternary structure, homodimer. The cofactor is Mg(2+). It depends on [4Fe-4S] cluster as a cofactor.

The protein resides in the cytoplasm. The enzyme catalyses cytidine(32) in tRNA + S-sulfanyl-L-cysteinyl-[cysteine desulfurase] + AH2 + ATP = 2-thiocytidine(32) in tRNA + L-cysteinyl-[cysteine desulfurase] + A + AMP + diphosphate + H(+). Its pathway is tRNA modification. Catalyzes the ATP-dependent 2-thiolation of cytidine in position 32 of tRNA, to form 2-thiocytidine (s(2)C32). The sulfur atoms are provided by the cysteine/cysteine desulfurase (IscS) system. In Serratia proteamaculans (strain 568), this protein is tRNA-cytidine(32) 2-sulfurtransferase.